The chain runs to 360 residues: Phospho-N-acetylmuramoyl-pentapeptide-transferase (360 aa).

10 helical membrane-spanning segments follow: residues 26 to 46, 70 to 90, 94 to 114, 136 to 156, 164 to 184, 199 to 219, 236 to 256, 263 to 283, 289 to 309, and 339 to 359; these read GVLATLTALVLSLFIGPFFIA, GTPTMGGALILLVVILTTLLW, GNPLVWVAVLTTLAFGAIGFV, LQSLVAFAAGGVLYALASNPV, FIPHVLIPMGAGFIVFSYFVI, GLAIVPTVMVAGALGVFAYVS, SGQMLIFCGALVGAGLGFLWF, VFMGDTGALALGAALAIVAIV, VLFIMGGVFVVETLSVIIQVV, and AVRFWIITVILVLVGLSSLKI.

This sequence belongs to the glycosyltransferase 4 family. MraY subfamily. It depends on Mg(2+) as a cofactor.

It is found in the cell inner membrane. The catalysed reaction is UDP-N-acetyl-alpha-D-muramoyl-L-alanyl-gamma-D-glutamyl-meso-2,6-diaminopimeloyl-D-alanyl-D-alanine + di-trans,octa-cis-undecaprenyl phosphate = di-trans,octa-cis-undecaprenyl diphospho-N-acetyl-alpha-D-muramoyl-L-alanyl-D-glutamyl-meso-2,6-diaminopimeloyl-D-alanyl-D-alanine + UMP. The protein operates within cell wall biogenesis; peptidoglycan biosynthesis. Functionally, catalyzes the initial step of the lipid cycle reactions in the biosynthesis of the cell wall peptidoglycan: transfers peptidoglycan precursor phospho-MurNAc-pentapeptide from UDP-MurNAc-pentapeptide onto the lipid carrier undecaprenyl phosphate, yielding undecaprenyl-pyrophosphoryl-MurNAc-pentapeptide, known as lipid I. This is Phospho-N-acetylmuramoyl-pentapeptide-transferase from Acidithiobacillus ferrooxidans (strain ATCC 23270 / DSM 14882 / CIP 104768 / NCIMB 8455) (Ferrobacillus ferrooxidans (strain ATCC 23270)).